We begin with the raw amino-acid sequence, 530 residues long: Serendipity locus protein alpha (530 aa).

In terms of tissue distribution, transient expression in blastoderm from nuclear cycle 11 to the onset of gastrulation.

Its subcellular location is the cytoplasm. The protein resides in the cell membrane. Required for the cellularization of the syncytial blastoderm embryo. Involved in the localization of the actin filaments just prior to and during plasma membrane invagination. Sry-alpha together with nullo and bnk may provide auxiliary functions, by acting both to stabilize a large and dynamic microfilament structure and regulate its functions. This chain is Serendipity locus protein alpha (Sry-alpha), found in Drosophila melanogaster (Fruit fly).